The following is a 688-amino-acid chain: Thyroid hormone-induced protein B (688 aa).

Residues 1–20 (MMLSHWVLLLSLGAVWLAEG) form the signal peptide. 4 consecutive MAM domains span residues 26–169 (GSCT…GYCI), 170–330 (ECDF…SCSG), 341–500 (AGCD…SCKI), and 509–669 (GKCT…PCND). Residues N32 and N135 are each glycosylated (N-linked (GlcNAc...) asparagine). N-linked (GlcNAc...) asparagine glycans are attached at residues N358 and N668.

The protein localises to the membrane. The protein resides in the secreted. Its subcellular location is the extracellular space. The sequence is that of Thyroid hormone-induced protein B from Xenopus laevis (African clawed frog).